The following is a 220-amino-acid chain: IQ domain-containing protein F3 (220 aa).

Positions 1 to 22 (MELDQDQKVETPEAAENGKDEM) are enriched in basic and acidic residues. Residues 1–81 (MELDQDQKVE…KQIQDEKTGI (81 aa)) are disordered. Acidic residues predominate over residues 23 to 50 (QLEEQTQDEDTTETETETETETEAEAEG). Residues 69 to 93 (QAEKQIQDEKTGIKEADRAIQEQTQ) adopt a coiled-coil conformation. The IQ domain occupies 146–175 (AELAGVKIQAWWRGTLVRRTLLLAILSAWT).

The chain is IQ domain-containing protein F3 (Iqcf3) from Rattus norvegicus (Rat).